We begin with the raw amino-acid sequence, 257 residues long: tRNA (guanine-N(1)-)-methyltransferase (257 aa).

S-adenosyl-L-methionine-binding positions include G112 and 136-141 (LGDYVL).

This sequence belongs to the RNA methyltransferase TrmD family. Homodimer.

It is found in the cytoplasm. It catalyses the reaction guanosine(37) in tRNA + S-adenosyl-L-methionine = N(1)-methylguanosine(37) in tRNA + S-adenosyl-L-homocysteine + H(+). Specifically methylates guanosine-37 in various tRNAs. The chain is tRNA (guanine-N(1)-)-methyltransferase from Salinispora arenicola (strain CNS-205).